Here is a 524-residue protein sequence, read N- to C-terminus: Apoptosis inhibitor 5-A (524 aa).

The ARM-like and Heat-like helical repeats stretch occupies residues 1-360 (MATVEELYRS…HQLGRKLPDF (360 aa)). Positions 440–524 (TLSWKPVQRT…RGNRSRGRIY (85 aa)) are disordered. The Nuclear localization signal signature appears at 455–476 (KRTSDETSSTSPPKKPIVGPKR). The segment covering 503-516 (GFQGGRGRGWGGRG) has biased composition (gly residues).

It belongs to the API5 family. In terms of assembly, monomer.

The protein localises to the nucleus. Functionally, may be an antiapoptotic factor. In Xenopus laevis (African clawed frog), this protein is Apoptosis inhibitor 5-A (api5-a).